We begin with the raw amino-acid sequence, 407 residues long: MNSVDIGRCRKRIVQYIWDPEPRNDEEPDASIWCLGVEYAPQPQKITANTTPGKLGNYQDELEAGTSKIDDVTAHGWPEAFVSDFESKIWMTYRSDFPPIPRLDNDEANHPMTLTVRIRTQLMDPQGFTSDTGWGCMIRSGQSLLANAMLTLCLGRDWRRGDKAEEEARLLSLFADHPDAPLSIHRFVKYGAESCGKHPGEWFGPSATARCIEALSAQCGNIAPRVYVTNDTSDVYEDSFLRVARSGSGSIQPTLILLGTRLGIDNVTPVYWDGLKAVLQLPQSVGIAGGRPSASHYFIGTQGPHFFYLDPHTTRPAVPYSIDGRLLSKTEISTYHTRRLRRIHIQDMDPSMLIGFLVRNEDDWEDWKGRVGSVVGKQIIHVFKGEEATYNQGRRGALDEVEALDDA.

C136 acts as the Nucleophile in catalysis. Catalysis depends on residues D310 and H312.

This sequence belongs to the peptidase C54 family.

Its subcellular location is the cytoplasm. It is found in the nucleus. It localises to the preautophagosomal structure. The enzyme catalyses [protein]-C-terminal L-amino acid-glycyl-phosphatidylethanolamide + H2O = [protein]-C-terminal L-amino acid-glycine + a 1,2-diacyl-sn-glycero-3-phosphoethanolamine. Its function is as follows. Cysteine protease that is required for autophagy. Plays a key role in cytoplasm to vacuole transport (Cvt) and autophagy by mediating both proteolytic activation and delipidation of atg8. The protease activity is required for proteolytic activation of atg8 by the cleavage of the C-terminal amino acid of atg8 to reveal a C-terminal glycine. Azg8 ubiquitin-like activity requires the exposure of the glycine at the C-terminus for its conjugation to phosphatidylethanolamine (PE) and its insertion to membranes, which is necessary for autophagy. The atg8-PE conjugate mediates tethering between adjacent membranes and stimulates membrane hemifusion, leading to expansion of the autophagosomal membrane during autophagy. In addition to the protease activity, also catalyzes deconjugation of PE-conjugated forms of atg8 during macroautophagy since atg8 delipidation is required to release the protein from membranes, which facilitates multiple events during macroautophagy, and especially for efficient autophagosome biogenesis, the assembly of atg99-containing tubulovesicular clusters into phagophores/autophagosomes, and for the disassembly of PAS-associated ATG components. Atg8 delipidation by atg4 also recycles atg8-PE generated on inappropriate membranes to maintain a reservoir of unlipidated atg8 that is required for autophagosome formation at the PAS. The sequence is that of Probable cysteine protease atg4 from Aspergillus oryzae (strain ATCC 42149 / RIB 40) (Yellow koji mold).